We begin with the raw amino-acid sequence, 367 residues long: GTPase Obg (367 aa).

The Obg domain occupies 1 to 158 (MFIDNVELTV…VQIRLELKLI (158 aa)). Positions 159–358 (ADVGLVGFPN…LKYALYDLVK (200 aa)) constitute an OBG-type G domain. GTP contacts are provided by residues 165-172 (GFPNVGKS), 190-194 (FTTLT), 212-215 (DIPG), 280-283 (TKID), and 339-341 (SAV). Mg(2+) is bound by residues serine 172 and threonine 192.

It belongs to the TRAFAC class OBG-HflX-like GTPase superfamily. OBG GTPase family. As to quaternary structure, monomer. The cofactor is Mg(2+).

The protein localises to the cytoplasm. Functionally, an essential GTPase which binds GTP, GDP and possibly (p)ppGpp with moderate affinity, with high nucleotide exchange rates and a fairly low GTP hydrolysis rate. Plays a role in control of the cell cycle, stress response, ribosome biogenesis and in those bacteria that undergo differentiation, in morphogenesis control. The protein is GTPase Obg of Nitratiruptor sp. (strain SB155-2).